Reading from the N-terminus, the 312-residue chain is MNAALRKWHRAVTLLPALSVYDETAQRVFTAAYDRRHKSFEDWLTAIAQLPLIEPRAVHLNQAVVTAEGAGDEIAIETLLKALMPWRKGPFSLCGVSLDCEWRSDFKYQRLLDAGFSVSGKKVLDVGTGNGYFLYRFLGSGAQCAVGVDPSWLYFAQFLALQKFFQQNRAVYLPTTLDDLSLEGFDCVLAMGVLYHRRDPLAFLAQLRNAVVCGGDLVIETLVVDGDAQTVYMPKQEYVGMHNVWFLPSIAALCRWLERLNFRIELCSEAVETTINEQRRTRWVNSFSLADFLQRAPSAPPPKRAFVIAKRL.

Carboxy-S-adenosyl-L-methionine-binding positions include Lys88, Trp102, Lys107, Gly127, 149–151 (DPS), 177–178 (LD), Met191, Tyr195, and Arg304.

Belongs to the class I-like SAM-binding methyltransferase superfamily. CmoB family. In terms of assembly, homotetramer.

The enzyme catalyses carboxy-S-adenosyl-L-methionine + 5-hydroxyuridine(34) in tRNA = 5-carboxymethoxyuridine(34) in tRNA + S-adenosyl-L-homocysteine + H(+). Catalyzes carboxymethyl transfer from carboxy-S-adenosyl-L-methionine (Cx-SAM) to 5-hydroxyuridine (ho5U) to form 5-carboxymethoxyuridine (cmo5U) at position 34 in tRNAs. The sequence is that of tRNA U34 carboxymethyltransferase from Dichelobacter nodosus (strain VCS1703A).